The sequence spans 1699 residues: Eukaryotic translation initiation factor 2-alpha kinase gcn-2 (1699 aa).

The RWD domain occupies 22 to 138 (EEKLALDAVY…HRVREFLTDH (117 aa)). Protein kinase domains follow at residues 108–507 (LTIL…DVVL) and 508–999 (VRNK…DEDL). Residues 114 to 122 (MADTWEGCV), Lys154, 497 to 505 (LGRGGFGDV), and Lys520 each bind ATP. Disordered regions lie at residues 572-615 (DSSL…SLMP) and 632-725 (KEWS…SVFE). The span at 669–706 (SSDDEDDDDSSEIDWDAESEEVEDEESDDSDEEDEDDG) shows a compositional bias: acidic residues. Residues 711–720 (QLNTETSTGA) show a composition bias toward polar residues. The active-site Proton acceptor is Asp829.

The protein belongs to the protein kinase superfamily. Ser/Thr protein kinase family. GCN2 subfamily.

The catalysed reaction is L-seryl-[protein] + ATP = O-phospho-L-seryl-[protein] + ADP + H(+). It catalyses the reaction L-threonyl-[protein] + ATP = O-phospho-L-threonyl-[protein] + ADP + H(+). Functionally, serine/threonine-protein kinase which phosphorylates the alpha subunit of eukaryotic translation-initiation factor 2 (eIF2alpha), leading to its inactivation and thus to a rapid reduction of translational initiation and repression of global protein synthesis. Involved in the unfolded protein response (UPR) triggered by several stresses including mitochondrial, osmotic and oxidative stresses, amino acid deprivation and UV irradiation, probably by phosphorylating and inhibiting eIF2alpha. In addition, leads to the selective translation/transcription of some mRNA including atf-5, pha-4 and gpdh-1 which are part of the UPR. Required for maintaining lifespan during amino acid starvation. Involved in hypoxia-mediated adaptive protective response. This Caenorhabditis elegans protein is Eukaryotic translation initiation factor 2-alpha kinase gcn-2.